A 285-amino-acid polypeptide reads, in one-letter code: 2,3,4,5-tetrahydropyridine-2,6-dicarboxylate N-succinyltransferase (285 aa).

Residues arginine 111 and aspartate 148 each coordinate substrate.

It belongs to the transferase hexapeptide repeat family. Homotrimer.

The protein localises to the cytoplasm. It catalyses the reaction (S)-2,3,4,5-tetrahydrodipicolinate + succinyl-CoA + H2O = (S)-2-succinylamino-6-oxoheptanedioate + CoA. The protein operates within amino-acid biosynthesis; L-lysine biosynthesis via DAP pathway; LL-2,6-diaminopimelate from (S)-tetrahydrodipicolinate (succinylase route): step 1/3. The polypeptide is 2,3,4,5-tetrahydropyridine-2,6-dicarboxylate N-succinyltransferase (Sinorhizobium medicae (strain WSM419) (Ensifer medicae)).